Reading from the N-terminus, the 73-residue chain is NAD(P)H-quinone oxidoreductase subunit L (73 aa).

The next 2 membrane-spanning stretches (helical) occupy residues 7–27 (LIGLTYAALAVLYLLVLPFLF) and 44–64 (VLMFFLVLFFFPGMVLVAPFM).

Belongs to the complex I NdhL subunit family. In terms of assembly, NDH-1 can be composed of about 15 different subunits; different subcomplexes with different compositions have been identified which probably have different functions.

The protein localises to the cellular thylakoid membrane. The enzyme catalyses a plastoquinone + NADH + (n+1) H(+)(in) = a plastoquinol + NAD(+) + n H(+)(out). The catalysed reaction is a plastoquinone + NADPH + (n+1) H(+)(in) = a plastoquinol + NADP(+) + n H(+)(out). NDH-1 shuttles electrons from an unknown electron donor, via FMN and iron-sulfur (Fe-S) centers, to quinones in the respiratory and/or the photosynthetic chain. The immediate electron acceptor for the enzyme in this species is believed to be plastoquinone. Couples the redox reaction to proton translocation, and thus conserves the redox energy in a proton gradient. Cyanobacterial NDH-1 also plays a role in inorganic carbon-concentration. The polypeptide is NAD(P)H-quinone oxidoreductase subunit L (Synechococcus sp. (strain JA-3-3Ab) (Cyanobacteria bacterium Yellowstone A-Prime)).